The sequence spans 534 residues: MPSNMKQFCKISVWLQQHDPDLLEIINNLCMLGNLSAAKYKHGVTFIYPKQAKIRDEIKKHAYSNDPSQAIKTLESLILPFYIPTPMEFTGEIGSYTGVKLEVEKKEANKVILKNGEAVLIPAADFKPFPDRRLAVWIMESGSMPLEGPPYKRKKEGGGNDPPVSKHISPYTPRTRIAIEVEKAFDECMRQNWCSVNNPYLAKSVSLLSFLSLNHPTEFIKVLPLIDFDPLVTFYLLLEPYKTHGDDFLIPETILFGPTGWNGTDLYQSAMLEFKKFFTQITRQTFMDIADTATKEVDVPICYSDPETVHSYANHVRTEILHHNMVNKVTTPNLVVQAYNELEQTNTIRHYGPIFPESTINALRFWKKLWQDEQRFVIHGLHRTLMDQPTYETSEFAEIVRNLRFSRPGNNYINELNITSPAMYGDKHTTGDIAPNDRFAMLVAFINSTDFLYTAIPEEKVGGNDTQTGSQTSSLTDLVPTRLHSFLNHNLSKLKILNRAQQTVKNILSNDCLNQLKHYVKHTGKNEILKLLQE.

It belongs to the asfivirus polyprotein pp62 family. In terms of assembly, monomer. Predominantly exists as a monomer, with very little dimers. Homodimerization seems to be linked to low pH. As to quaternary structure, homodimer; disulfide-linked. Homotrimer; disulfide-linked. Homohexamer. Monoubiquitinated in vitro by viral UBCv1. Post-translationally, specific enzymatic cleavages in vivo by the viral pS273R protease yield mature proteins.

The protein localises to the host cytoplasm. It is found in the host perinuclear region. Its subcellular location is the virion. Essential for the correct assembly and maturation of the core of the virion. Functionally, component of the core shell. Binds to phosphatidylserine, which may enable the core shell binding with the inner membrane. In terms of biological role, component of the core shell. Binds to phosphatidylserine and DNA, which may link the core shell to the inner membrane and to the viral nucleoid. Its function is as follows. Component of the core shell. The chain is Polyprotein pp62 from Ornithodoros (relapsing fever ticks).